A 154-amino-acid chain; its full sequence is MIKVICVGTIKERYFKEAAEEYKKRLSRWTKIEEIEIKEEDENKYRNVEMLLKKEAEKILKHIKEGQYVVVFDINGTQLSSEEFAELLDRKVSKGEEIVFVIGGSNGLADAIKKRANLLISFSKLTFPHQLFRILVYEQIYRGFTIIKGIKYHK.

S-adenosyl-L-methionine contacts are provided by residues G103 and 122–127; that span reads FSKLTF.

It belongs to the RNA methyltransferase RlmH family. In terms of assembly, homodimer.

Its subcellular location is the cytoplasm. It catalyses the reaction pseudouridine(1915) in 23S rRNA + S-adenosyl-L-methionine = N(3)-methylpseudouridine(1915) in 23S rRNA + S-adenosyl-L-homocysteine + H(+). Specifically methylates the pseudouridine at position 1915 (m3Psi1915) in 23S rRNA. The sequence is that of Ribosomal RNA large subunit methyltransferase H from Caldicellulosiruptor saccharolyticus (strain ATCC 43494 / DSM 8903 / Tp8T 6331).